The sequence spans 390 residues: GTPase Obg (390 aa).

In terms of domain architecture, Obg spans 1-159 (MKFVDEATIL…RELMLELLLL (159 aa)). An OBG-type G domain is found at 160 to 333 (ADVGMLGLPN…LCWDVMNFLN (174 aa)). GTP-binding positions include 166–173 (GLPNAGKS), 191–195 (FTTLI), 213–216 (DIPG), 283–286 (NKID), and 314–316 (SAA). The Mg(2+) site is built by Ser-173 and Thr-193. The span at 363–384 (EVEAEAESEDDDDWDEEDDDGV) shows a compositional bias: acidic residues. The disordered stretch occupies residues 363–390 (EVEAEAESEDDDDWDEEDDDGVEFIYER).

The protein belongs to the TRAFAC class OBG-HflX-like GTPase superfamily. OBG GTPase family. As to quaternary structure, monomer. Requires Mg(2+) as cofactor.

Its subcellular location is the cytoplasm. An essential GTPase which binds GTP, GDP and possibly (p)ppGpp with moderate affinity, with high nucleotide exchange rates and a fairly low GTP hydrolysis rate. Plays a role in control of the cell cycle, stress response, ribosome biogenesis and in those bacteria that undergo differentiation, in morphogenesis control. This Yersinia enterocolitica serotype O:8 / biotype 1B (strain NCTC 13174 / 8081) protein is GTPase Obg.